The primary structure comprises 116 residues: uncharacterized protein (116 aa).

The 109-residue stretch at 5–113 folds into the VOC domain; that stretch reads EVKMVVLSTE…TGNGLVFYSP (109 aa). Lys76 is covalently cross-linked (Isoglutamyl lysine isopeptide (Lys-Gln) (interchain with Q-Cter in protein Pup)).

This is an uncharacterized protein from Mycolicibacterium smegmatis (strain ATCC 700084 / mc(2)155) (Mycobacterium smegmatis).